The following is a 689-amino-acid chain: Glycine--tRNA ligase beta subunit (689 aa).

It belongs to the class-II aminoacyl-tRNA synthetase family. As to quaternary structure, tetramer of two alpha and two beta subunits.

The protein resides in the cytoplasm. It carries out the reaction tRNA(Gly) + glycine + ATP = glycyl-tRNA(Gly) + AMP + diphosphate. The chain is Glycine--tRNA ligase beta subunit from Shewanella woodyi (strain ATCC 51908 / MS32).